We begin with the raw amino-acid sequence, 376 residues long: Chaperone protein DnaJ (376 aa).

The 66-residue stretch at 5–70 folds into the J domain; the sequence is DYYEVLGVAK…QKRAAYDQYG (66 aa). The CR-type zinc-finger motif lies at 136–214; sequence GYDTQIRVPS…CHGSGKVKET (79 aa). Residues C149, C152, C166, C169, C188, C191, C202, and C205 each contribute to the Zn(2+) site. CXXCXGXG motif repeat units follow at residues 149-156, 166-173, 188-195, and 202-209; these read CEVCHGSG, CPTCHGQG, CPKCHGTG, and CAHCHGSG.

The protein belongs to the DnaJ family. Homodimer. Requires Zn(2+) as cofactor.

The protein resides in the cytoplasm. Functionally, participates actively in the response to hyperosmotic and heat shock by preventing the aggregation of stress-denatured proteins and by disaggregating proteins, also in an autonomous, DnaK-independent fashion. Unfolded proteins bind initially to DnaJ; upon interaction with the DnaJ-bound protein, DnaK hydrolyzes its bound ATP, resulting in the formation of a stable complex. GrpE releases ADP from DnaK; ATP binding to DnaK triggers the release of the substrate protein, thus completing the reaction cycle. Several rounds of ATP-dependent interactions between DnaJ, DnaK and GrpE are required for fully efficient folding. Also involved, together with DnaK and GrpE, in the DNA replication of plasmids through activation of initiation proteins. In Burkholderia multivorans (strain ATCC 17616 / 249), this protein is Chaperone protein DnaJ.